The following is a 989-amino-acid chain: Phosphoenolpyruvate carboxylase (989 aa).

Catalysis depends on residues histidine 175 and lysine 630.

This sequence belongs to the PEPCase type 1 family. It depends on Mg(2+) as a cofactor.

The catalysed reaction is oxaloacetate + phosphate = phosphoenolpyruvate + hydrogencarbonate. Forms oxaloacetate, a four-carbon dicarboxylic acid source for the tricarboxylic acid cycle. The chain is Phosphoenolpyruvate carboxylase from Prochlorococcus marinus (strain MIT 9215).